Here is a 291-residue protein sequence, read N- to C-terminus: N-acetylmannosamine kinase (291 aa).

Residues 5 to 12 (AIDIGGTK) and 132 to 139 (GVGGGVVC) contribute to the ATP site. The Zn(2+) site is built by His-156, Cys-166, Cys-168, and Cys-173.

It belongs to the ROK (NagC/XylR) family. NanK subfamily. Homodimer.

It catalyses the reaction an N-acyl-D-mannosamine + ATP = an N-acyl-D-mannosamine 6-phosphate + ADP + H(+). Its pathway is amino-sugar metabolism; N-acetylneuraminate degradation; D-fructose 6-phosphate from N-acetylneuraminate: step 2/5. Catalyzes the phosphorylation of N-acetylmannosamine (ManNAc) to ManNAc-6-P. This Salmonella paratyphi B (strain ATCC BAA-1250 / SPB7) protein is N-acetylmannosamine kinase.